A 388-amino-acid polypeptide reads, in one-letter code: Acetate kinase (388 aa).

A Mg(2+)-binding site is contributed by Asn14. Residue Lys21 coordinates ATP. Arg80 is a binding site for substrate. Asp137 serves as the catalytic Proton donor/acceptor. ATP is bound by residues 197 to 201, 271 to 273, and 319 to 323; these read HLGNG, DFR, and GIGEH. Position 373 (Glu373) interacts with Mg(2+).

This sequence belongs to the acetokinase family. In terms of assembly, homodimer. It depends on Mg(2+) as a cofactor. The cofactor is Mn(2+).

Its subcellular location is the cytoplasm. The catalysed reaction is acetate + ATP = acetyl phosphate + ADP. Its pathway is metabolic intermediate biosynthesis; acetyl-CoA biosynthesis; acetyl-CoA from acetate: step 1/2. Catalyzes the formation of acetyl phosphate from acetate and ATP. Can also catalyze the reverse reaction. The polypeptide is Acetate kinase (Mycobacterium marinum (strain ATCC BAA-535 / M)).